Reading from the N-terminus, the 239-residue chain is tRNA (guanine-N(1)-)-methyltransferase (239 aa).

S-adenosyl-L-methionine-binding positions include glycine 109 and 133–138 (IGDYVL). Disordered stretches follow at residues 163–187 (PASRHDDSHSPALDRRLEGPSYTRP) and 217–239 (QRTRERRPELLADPVGPQDDPGR). Composition is skewed to basic and acidic residues over residues 165-180 (SRHDDSHSPALDRRLE) and 217-226 (QRTRERRPEL).

The protein belongs to the RNA methyltransferase TrmD family. As to quaternary structure, homodimer.

It localises to the cytoplasm. The enzyme catalyses guanosine(37) in tRNA + S-adenosyl-L-methionine = N(1)-methylguanosine(37) in tRNA + S-adenosyl-L-homocysteine + H(+). In terms of biological role, specifically methylates guanosine-37 in various tRNAs. This is tRNA (guanine-N(1)-)-methyltransferase from Mycolicibacterium paratuberculosis (strain ATCC BAA-968 / K-10) (Mycobacterium paratuberculosis).